A 405-amino-acid chain; its full sequence is S-adenosylmethionine synthase (405 aa).

ATP is bound at residue 139-144; the sequence is GQGSVD.

The protein belongs to the AdoMet synthase 2 family. Mg(2+) is required as a cofactor.

The catalysed reaction is L-methionine + ATP + H2O = S-adenosyl-L-methionine + phosphate + diphosphate. It functions in the pathway amino-acid biosynthesis; S-adenosyl-L-methionine biosynthesis; S-adenosyl-L-methionine from L-methionine: step 1/1. Its function is as follows. Catalyzes the formation of S-adenosylmethionine from methionine and ATP. This is S-adenosylmethionine synthase from Thermococcus gammatolerans (strain DSM 15229 / JCM 11827 / EJ3).